Here is a 366-residue protein sequence, read N- to C-terminus: Ubiquitin carboxyl-terminal hydrolase 46 (366 aa).

A USP domain is found at 35–365 (FGLVNFGNTC…SGYILFYQSR (331 aa)). Cysteine 44 functions as the Nucleophile in the catalytic mechanism. Zn(2+) contacts are provided by cysteine 182, cysteine 185, cysteine 229, and cysteine 232. Histidine 313 serves as the catalytic Proton acceptor.

The protein belongs to the peptidase C19 family. USP12/USP46 subfamily. Interacts with WDR48. Interacts with WDR20. Interacts with DMWD. Component of the USP46/WDR20/WDR48 deubiquitinating complex. Detected in lung and spleen, and at lower levels in brain, kidney, testis and liver.

It is found in the cytoplasm. It catalyses the reaction Thiol-dependent hydrolysis of ester, thioester, amide, peptide and isopeptide bonds formed by the C-terminal Gly of ubiquitin (a 76-residue protein attached to proteins as an intracellular targeting signal).. Its function is as follows. Deubiquitinating enzyme that plays a role in behavior, possibly by regulating GABA action. May act by mediating the deubiquitination of GAD1/GAD67. Has almost no deubiquitinating activity by itself and requires the interaction with WDR48 to have a high activity. Not involved in deubiquitination of monoubiquitinated FANCD2. The protein is Ubiquitin carboxyl-terminal hydrolase 46 of Rattus norvegicus (Rat).